Consider the following 343-residue polypeptide: Multidrug resistance protein MdtN (343 aa).

Over 1-12 (MESTPKKAPRSK) the chain is Cytoplasmic. A helical; Signal-anchor for type II membrane protein transmembrane segment spans residues 13–33 (FPALLVVALALVALVFVIWRV). At 34–343 (DSAPSTNDAY…ASAVANLEPQ (310 aa)) the chain is on the periplasmic side.

This sequence belongs to the membrane fusion protein (MFP) (TC 8.A.1) family. In terms of assembly, could be part of a tripartite efflux system composed of MdtN, MdtO and MdtP.

Its subcellular location is the cell inner membrane. In terms of biological role, could be involved in resistance to puromycin, acriflavine and tetraphenylarsonium chloride. In Escherichia coli (strain K12), this protein is Multidrug resistance protein MdtN (mdtN).